Consider the following 37-residue polypeptide: Large ribosomal subunit protein bL36 (37 aa).

Belongs to the bacterial ribosomal protein bL36 family.

This Heliobacterium modesticaldum (strain ATCC 51547 / Ice1) protein is Large ribosomal subunit protein bL36.